Reading from the N-terminus, the 448-residue chain is Methionine aminopeptidase 2-1 (448 aa).

Residues 1 to 83 form a disordered region; sequence MAAQVIPELQ…TQKAQTEPPR (83 aa). The span at 32–48 shows a compositional bias: acidic residues; that stretch reads ENEDGDSEDDNGDDQGA. Residues 59–73 show a composition bias toward basic residues; that stretch reads AKKKKKKKPKKKKKD. H198 is a substrate binding site. Residues D218, D229, and H298 each contribute to the a divalent metal cation site. H306 serves as a coordination point for substrate. Positions 334 and 429 each coordinate a divalent metal cation.

Belongs to the peptidase M24A family. Methionine aminopeptidase eukaryotic type 2 subfamily. Requires Co(2+) as cofactor. It depends on Zn(2+) as a cofactor. The cofactor is Mn(2+). Fe(2+) is required as a cofactor.

It is found in the cytoplasm. The enzyme catalyses Release of N-terminal amino acids, preferentially methionine, from peptides and arylamides.. In terms of biological role, cotranslationally removes the N-terminal methionine from nascent proteins. The N-terminal methionine is often cleaved when the second residue in the primary sequence is small and uncharged (Met-Ala-, Cys, Gly, Pro, Ser, Thr, or Val). The chain is Methionine aminopeptidase 2-1 from Ajellomyces capsulatus (strain G186AR / H82 / ATCC MYA-2454 / RMSCC 2432) (Darling's disease fungus).